The primary structure comprises 189 residues: Prophage DNA-packing protein NohA (189 aa).

It belongs to the terminase small subunit family.

This is Prophage DNA-packing protein NohA (nohA) from Escherichia coli (strain K12).